The primary structure comprises 203 residues: Proteasome subunit beta 2 (203 aa).

Residues 1–9 (MGEEVQIGA) constitute a propeptide, removed in mature form; by autocatalysis. T10 serves as the catalytic Nucleophile.

This sequence belongs to the peptidase T1B family. In terms of assembly, the 20S proteasome core is composed of 14 alpha and 14 beta subunits that assemble into four stacked heptameric rings, resulting in a barrel-shaped structure. The two inner rings, each composed of seven catalytic beta subunits, are sandwiched by two outer rings, each composed of seven alpha subunits. The catalytic chamber with the active sites is on the inside of the barrel. Has a gated structure, the ends of the cylinder being occluded by the N-termini of the alpha-subunits. Is capped at one or both ends by the proteasome regulatory ATPase, PAN.

The protein resides in the cytoplasm. The enzyme catalyses Cleavage of peptide bonds with very broad specificity.. With respect to regulation, the formation of the proteasomal ATPase PAN-20S proteasome complex, via the docking of the C-termini of PAN into the intersubunit pockets in the alpha-rings, triggers opening of the gate for substrate entry. Interconversion between the open-gate and close-gate conformations leads to a dynamic regulation of the 20S proteasome proteolysis activity. Component of the proteasome core, a large protease complex with broad specificity involved in protein degradation. The sequence is that of Proteasome subunit beta 2 from Pyrobaculum arsenaticum (strain DSM 13514 / JCM 11321 / PZ6).